The chain runs to 138 residues: Large ribosomal subunit protein uL16 (138 aa).

The segment covering 1–13 (MLQPSRRKFRKEQ) has biased composition (basic residues). Residues 1-22 (MLQPSRRKFRKEQKGRNTGIAT) are disordered.

It belongs to the universal ribosomal protein uL16 family. In terms of assembly, part of the 50S ribosomal subunit.

Binds 23S rRNA and is also seen to make contacts with the A and possibly P site tRNAs. The protein is Large ribosomal subunit protein uL16 of Methylibium petroleiphilum (strain ATCC BAA-1232 / LMG 22953 / PM1).